Consider the following 250-residue polypeptide: Probable phosphatase VIBHAR_04983 (250 aa).

Residues H8, H10, H16, H41, E74, H102, H132, D194, and H196 each coordinate Zn(2+).

Belongs to the PHP family. Requires Zn(2+) as cofactor.

This Vibrio campbellii (strain ATCC BAA-1116) protein is Probable phosphatase VIBHAR_04983.